A 193-amino-acid polypeptide reads, in one-letter code: MITLNTEEKIFIYSWLKNILSHELTEQQLQQYQQGVFTPLFDFLSEQDLAEQINTVRNSLMQLSNLPLAHLELAADFAQLFLLNGENSALPYASAYLSEKELNQHIAFIDHLLLKYQLKFDHSLREPSDHLAVYLELLITLEKSGQKEKSFNFIQHYLLAWLIPFNKKVQKIKTETSFYQAITEILITLLNKT.

It belongs to the TorD/DmsD family. TorD subfamily.

The protein resides in the cytoplasm. Involved in the biogenesis of TorA. Acts on TorA before the insertion of the molybdenum cofactor and, as a result, probably favors a conformation of the apoenzyme that is competent for acquiring the cofactor. This Histophilus somni (strain 129Pt) (Haemophilus somnus) protein is Chaperone protein TorD.